A 956-amino-acid polypeptide reads, in one-letter code: Valine--tRNA ligase (956 aa).

Positions 69-79 (PNITGVLHMGH) match the 'HIGH' region motif. Residues 566–570 (KMSKS) carry the 'KMSKS' region motif. An ATP-binding site is contributed by lysine 569. Residues 885 to 911 (LCARLQKAWQKARQKVQQVERKLADAQ) adopt a coiled-coil conformation.

It belongs to the class-I aminoacyl-tRNA synthetase family. ValS type 1 subfamily. As to quaternary structure, monomer.

It localises to the cytoplasm. It carries out the reaction tRNA(Val) + L-valine + ATP = L-valyl-tRNA(Val) + AMP + diphosphate. Its function is as follows. Catalyzes the attachment of valine to tRNA(Val). As ValRS can inadvertently accommodate and process structurally similar amino acids such as threonine, to avoid such errors, it has a 'posttransfer' editing activity that hydrolyzes mischarged Thr-tRNA(Val) in a tRNA-dependent manner. This is Valine--tRNA ligase from Treponema pallidum (strain Nichols).